A 650-amino-acid polypeptide reads, in one-letter code: Probable acyl-CoA dehydrogenase FadE10 (650 aa).

The segment at 1-23 (MAQQTQVTEEQARALAEESRESG) is disordered. Over residues 10–23 (EQARALAEESRESG) the composition is skewed to basic and acidic residues. Residue Glu422 is the Proton acceptor of the active site.

The protein belongs to the acyl-CoA dehydrogenase family. FAD is required as a cofactor.

It catalyses the reaction a 2,3-saturated acyl-CoA + A = a 2,3-dehydroacyl-CoA + AH2. This chain is Probable acyl-CoA dehydrogenase FadE10 (fadE10), found in Mycobacterium tuberculosis (strain CDC 1551 / Oshkosh).